A 207-amino-acid polypeptide reads, in one-letter code: Large ribosomal subunit protein uL4 (207 aa).

The disordered stretch occupies residues 56 to 76; the sequence is EVRGGGRKPWRQKGTGRARAG. Over residues 60 to 71 the composition is skewed to basic residues; that stretch reads GGRKPWRQKGTG.

It belongs to the universal ribosomal protein uL4 family. Part of the 50S ribosomal subunit.

Functionally, one of the primary rRNA binding proteins, this protein initially binds near the 5'-end of the 23S rRNA. It is important during the early stages of 50S assembly. It makes multiple contacts with different domains of the 23S rRNA in the assembled 50S subunit and ribosome. Its function is as follows. Forms part of the polypeptide exit tunnel. The protein is Large ribosomal subunit protein uL4 of Desulfitobacterium hafniense (strain Y51).